Here is a 164-residue protein sequence, read N- to C-terminus: Sperm axonemal maintenance protein CFAP97D1 (164 aa).

A coiled-coil region spans residues 61–88 (LSKIQGEQKRIDKIEYENRQLCQKIANA).

It belongs to the CFAP97 family. In terms of tissue distribution, expressed exclusively in testis.

Required for male fertility through its role in axonemal doublet stabilization which is essential for sperm motility and fertilization. This Mus musculus (Mouse) protein is Sperm axonemal maintenance protein CFAP97D1 (Cfap97d1).